We begin with the raw amino-acid sequence, 395 residues long: S-adenosylmethionine synthase 2 (395 aa).

Glutamate 9 is a binding site for Mg(2+). ATP is bound at residue histidine 15. Glutamate 43 is a binding site for K(+). Positions 56 and 99 each coordinate L-methionine. ATP contacts are provided by residues 167–169 (DGK), 235–238 (SGRF), aspartate 246, 252–253 (RK), alanine 269, lysine 273, and lysine 277. Aspartate 246 provides a ligand contact to L-methionine. Lysine 277 contributes to the L-methionine binding site.

Belongs to the AdoMet synthase family. In terms of assembly, homotetramer. Mn(2+) is required as a cofactor. The cofactor is Mg(2+). It depends on Co(2+) as a cofactor. K(+) serves as cofactor.

The protein localises to the cytoplasm. It carries out the reaction L-methionine + ATP + H2O = S-adenosyl-L-methionine + phosphate + diphosphate. The protein operates within amino-acid biosynthesis; S-adenosyl-L-methionine biosynthesis; S-adenosyl-L-methionine from L-methionine: step 1/1. Functionally, catalyzes the formation of S-adenosylmethionine from methionine and ATP. The reaction comprises two steps that are both catalyzed by the same enzyme: formation of S-adenosylmethionine (AdoMet) and triphosphate, and subsequent hydrolysis of the triphosphate. The sequence is that of S-adenosylmethionine synthase 2 (METK2) from Suaeda salsa (Seepweed).